We begin with the raw amino-acid sequence, 468 residues long: 3-isopropylmalate dehydratase large subunit (468 aa).

Cys349, Cys409, and Cys412 together coordinate [4Fe-4S] cluster.

The protein belongs to the aconitase/IPM isomerase family. LeuC type 1 subfamily. In terms of assembly, heterodimer of LeuC and LeuD. [4Fe-4S] cluster is required as a cofactor.

The enzyme catalyses (2R,3S)-3-isopropylmalate = (2S)-2-isopropylmalate. The protein operates within amino-acid biosynthesis; L-leucine biosynthesis; L-leucine from 3-methyl-2-oxobutanoate: step 2/4. Functionally, catalyzes the isomerization between 2-isopropylmalate and 3-isopropylmalate, via the formation of 2-isopropylmaleate. The chain is 3-isopropylmalate dehydratase large subunit from Roseobacter denitrificans (strain ATCC 33942 / OCh 114) (Erythrobacter sp. (strain OCh 114)).